Here is a 545-residue protein sequence, read N- to C-terminus: ATP synthase subunit alpha (545 aa).

172–179 is an ATP binding site; it reads GDRKTGKT. Residues 511-545 are disordered; sequence FQTTDGTPVINEPEARPLGDDEVTKSQITVSRKTQ. Basic and acidic residues predominate over residues 523–534; sequence PEARPLGDDEVT. Polar residues predominate over residues 535–545; it reads KSQITVSRKTQ.

The protein belongs to the ATPase alpha/beta chains family. In terms of assembly, F-type ATPases have 2 components, CF(1) - the catalytic core - and CF(0) - the membrane proton channel. CF(1) has five subunits: alpha(3), beta(3), gamma(1), delta(1), epsilon(1). CF(0) has three main subunits: a(1), b(2) and c(9-12). The alpha and beta chains form an alternating ring which encloses part of the gamma chain. CF(1) is attached to CF(0) by a central stalk formed by the gamma and epsilon chains, while a peripheral stalk is formed by the delta and b chains.

The protein resides in the cell membrane. It carries out the reaction ATP + H2O + 4 H(+)(in) = ADP + phosphate + 5 H(+)(out). Its function is as follows. Produces ATP from ADP in the presence of a proton gradient across the membrane. The alpha chain is a regulatory subunit. The chain is ATP synthase subunit alpha from Corynebacterium jeikeium (strain K411).